A 311-amino-acid polypeptide reads, in one-letter code: Chemotaxis protein CheV3 (311 aa).

Residues Glu13–Leu164 enclose the CheW-like domain. In terms of domain architecture, Response regulatory spans Glu182–Asp308. Residue Asp241 is modified to 4-aspartylphosphate.

Its function is as follows. Plays a role in chemotaxis signal transduction system in order to colonize the host stomach. May act as a phosphate sink to control the flow of phosphate to CheAY. This Helicobacter pylori (strain ATCC 700392 / 26695) (Campylobacter pylori) protein is Chemotaxis protein CheV3.